The chain runs to 323 residues: Acetyl-coenzyme A carboxylase carboxyl transferase subunit alpha (323 aa).

Residues 39–293 form the CoA carboxyltransferase C-terminal domain; the sequence is RLSKKSQQLT…RRALADSLRQ (255 aa).

This sequence belongs to the AccA family. Acetyl-CoA carboxylase is a heterohexamer composed of biotin carboxyl carrier protein (AccB), biotin carboxylase (AccC) and two subunits each of ACCase subunit alpha (AccA) and ACCase subunit beta (AccD).

It localises to the cytoplasm. It carries out the reaction N(6)-carboxybiotinyl-L-lysyl-[protein] + acetyl-CoA = N(6)-biotinyl-L-lysyl-[protein] + malonyl-CoA. The protein operates within lipid metabolism; malonyl-CoA biosynthesis; malonyl-CoA from acetyl-CoA: step 1/1. Its function is as follows. Component of the acetyl coenzyme A carboxylase (ACC) complex. First, biotin carboxylase catalyzes the carboxylation of biotin on its carrier protein (BCCP) and then the CO(2) group is transferred by the carboxyltransferase to acetyl-CoA to form malonyl-CoA. The polypeptide is Acetyl-coenzyme A carboxylase carboxyl transferase subunit alpha (Paraburkholderia phymatum (strain DSM 17167 / CIP 108236 / LMG 21445 / STM815) (Burkholderia phymatum)).